Reading from the N-terminus, the 88-residue chain is Large ribosomal subunit protein bL31B (88 aa).

This sequence belongs to the bacterial ribosomal protein bL31 family. Type B subfamily. Part of the 50S ribosomal subunit.

The chain is Large ribosomal subunit protein bL31B from Leuconostoc citreum (strain KM20).